The primary structure comprises 487 residues: Cell wall protein TIR4 (487 aa).

A signal peptide spans 1 to 22; sequence MAYSKITLLAALAAIAYAQTQA. Tandem repeats lie at residues 137 to 148, 149 to 160, 161 to 172, 173 to 184, 185 to 196, 197 to 208, 209 to 220, 221 to 232, 233 to 244, 245 to 256, and 257 to 268. The interval 137-268 is 11 X 12 AA approximate tandem repeats, Ser-rich; that stretch reads SSSVAPSSSE…SVASSTSEAT (132 aa). Residues 206–299 form a disordered region; the sequence is EVASSSVAPS…SVSSSSAVSS (94 aa). 5 N-linked (GlcNAc...) asparagine glycosylation sites follow: Asn-327, Asn-348, Asn-368, Asn-403, and Asn-404. A lipid anchor (GPI-anchor amidated asparagine) is attached at Asn-465. Positions 466–487 are cleaved as a propeptide — removed in mature form; that stretch reads GAAKAVIGMGAGALAAVAAMLL.

This sequence belongs to the SRP1/TIP1 family. The GPI-anchor is attached to the protein in the endoplasmic reticulum and serves to target the protein to the cell surface. There, the glucosamine-inositol phospholipid moiety is cleaved off and the GPI-modified mannoprotein is covalently attached via its lipidless GPI glycan remnant to the 1,6-beta-glucan of the outer cell wall layer.

The protein localises to the secreted. The protein resides in the cell wall. It is found in the membrane. Component of the cell wall. Required for anaerobic growth. The sequence is that of Cell wall protein TIR4 (TIR4) from Saccharomyces cerevisiae (strain ATCC 204508 / S288c) (Baker's yeast).